Here is a 173-residue protein sequence, read N- to C-terminus: Crossover junction endodeoxyribonuclease RuvC (173 aa).

Active-site residues include Asp-8, Glu-67, and Asp-139. The Mg(2+) site is built by Asp-8, Glu-67, and Asp-139.

It belongs to the RuvC family. As to quaternary structure, homodimer which binds Holliday junction (HJ) DNA. The HJ becomes 2-fold symmetrical on binding to RuvC with unstacked arms; it has a different conformation from HJ DNA in complex with RuvA. In the full resolvosome a probable DNA-RuvA(4)-RuvB(12)-RuvC(2) complex forms which resolves the HJ. Requires Mg(2+) as cofactor.

It is found in the cytoplasm. The catalysed reaction is Endonucleolytic cleavage at a junction such as a reciprocal single-stranded crossover between two homologous DNA duplexes (Holliday junction).. Functionally, the RuvA-RuvB-RuvC complex processes Holliday junction (HJ) DNA during genetic recombination and DNA repair. Endonuclease that resolves HJ intermediates. Cleaves cruciform DNA by making single-stranded nicks across the HJ at symmetrical positions within the homologous arms, yielding a 5'-phosphate and a 3'-hydroxyl group; requires a central core of homology in the junction. The consensus cleavage sequence is 5'-(A/T)TT(C/G)-3'. Cleavage occurs on the 3'-side of the TT dinucleotide at the point of strand exchange. HJ branch migration catalyzed by RuvA-RuvB allows RuvC to scan DNA until it finds its consensus sequence, where it cleaves and resolves the cruciform DNA. The protein is Crossover junction endodeoxyribonuclease RuvC of Proteus mirabilis (strain HI4320).